The following is a 398-amino-acid chain: Protein FAM53A (398 aa).

The tract at residues 85 to 253 (QWQPQSPRPG…TSTPALGGRR (169 aa)) is disordered. Over residues 103 to 115 (VDPSESTGSSTAP) the composition is skewed to polar residues. Over residues 123–132 (SLSEPEELVR) the composition is skewed to basic and acidic residues. Residue Ser125 is modified to Phosphoserine. Composition is skewed to low complexity over residues 176–193 (STGP…ASGG) and 234–250 (TPLP…PALG). Positions 268–276 (KRSRRKRRR) match the Nuclear localization signal motif. Residues Ser301 and Ser304 each carry the phosphoserine modification. The disordered stretch occupies residues 336–398 (PGCSQRGLRT…ELDLEQIENN (63 aa)). Residues 363–375 (GSRRSSGDPRDGD) show a composition bias toward basic and acidic residues.

It belongs to the FAM53 family.

It is found in the nucleus. Its function is as follows. May play an important role in neural development; the dorsomedial roof of the third ventricle. This chain is Protein FAM53A, found in Homo sapiens (Human).